An 803-amino-acid polypeptide reads, in one-letter code: Subtilisin-like protease SBT5.5 (803 aa).

Residues 1–22 form the signal peptide; sequence MKRIFGIFIFLSLLLFLVPLLA. A propeptide spans 23 to 112 (activation peptide); that stretch reads SCTKEKQVYI…KSDPRKYKIH (90 aa). Residues 30–108 form the Inhibitor I9 domain; the sequence is VYIVYFGEHK…VSVFKSDPRK (79 aa). The Peptidase S8 domain occupies 140–656; sequence KYDVNDRFRV…SRHFRPTKAA (517 aa). Catalysis depends on aspartate 169, which acts as the Charge relay system. Residue asparagine 202 is glycosylated (N-linked (GlcNAc...) asparagine). Residue histidine 244 is the Charge relay system of the active site. The region spanning 409-504 is the PA domain; sequence YAPLVYAPDV…VFSSTVDRIL (96 aa). Catalysis depends on serine 589, which acts as the Charge relay system. Asparagine 725 is a glycosylation site (N-linked (GlcNAc...) asparagine).

Belongs to the peptidase S8 family.

It is found in the secreted. The polypeptide is Subtilisin-like protease SBT5.5 (Arabidopsis thaliana (Mouse-ear cress)).